Consider the following 168-residue polypeptide: uncharacterized protein (168 aa).

Residues methionine 1–serine 15 are compositionally biased toward low complexity. Positions methionine 1 to asparagine 107 are disordered. Residues serine 33 to serine 47 are compositionally biased toward acidic residues. A compositionally biased stretch (low complexity) spans aspartate 48–asparagine 107.

This is an uncharacterized protein from Dictyostelium discoideum (Social amoeba).